Here is a 677-residue protein sequence, read N- to C-terminus: Heat shock transcription factor (677 aa).

Disordered regions lie at residues 1-56 and 115-164; these read MGHN…DDSN and STSS…SQQP. Polar residues-rich tracts occupy residues 115 to 131 and 143 to 164; these read STSS…TNAT and QPSS…SQQP. Residues 193-297 mediate DNA binding; it reads ARPAFVNKLW…EYLLENIVRQ (105 aa). The interval 320-373 is involved in trimerization; that stretch reads ELETVKYNQLAIAEDLKRITKDNEMLWKENMMARERHQSQQQVLEKLLRFLSSV. Low complexity-rich tracts occupy residues 400–416 and 457–501; these read NHMS…INPN and RSMS…QGQQ. Disordered regions lie at residues 400 to 444, 457 to 541, and 606 to 677; these read NHMS…VPLQ, RSMS…NQYS, and KLNP…RRAA. Residues 466 to 677 are activatory; it reads NLNQRQSPQN…NNGQKRRRAA (212 aa). Composition is skewed to polar residues over residues 502-541 and 629-641; these read FSYP…NQYS and FANT…SEQP. The segment covering 650–669 has biased composition (basic and acidic residues); that stretch reads EELRNSRLHEPDRSFEEKNN.

This sequence belongs to the HSF family. Homotrimer. Homotrimerization increases the affinity of HSF1 to DNA. Post-translationally, exhibits temperature-dependent phosphorylation.

The protein resides in the nucleus. Functionally, DNA-binding transcription factor that specifically binds heat shock promoter elements (HSE) and activates transcription. The chain is Heat shock transcription factor from Kluyveromyces lactis (strain ATCC 8585 / CBS 2359 / DSM 70799 / NBRC 1267 / NRRL Y-1140 / WM37) (Yeast).